Reading from the N-terminus, the 187-residue chain is UPF0301 protein YqgE (187 aa).

It belongs to the UPF0301 (AlgH) family.

This is UPF0301 protein YqgE from Salmonella heidelberg (strain SL476).